The chain runs to 1129 residues: Protein DWARF 53-LIKE (1129 aa).

A Clp R domain is found at 8-180; sequence ARQCLSPAAV…KLAILRPAPP (173 aa). 2 repeat regions span residues 12–85 and 102–180; these read LSPA…LDRL and VSNS…PAPP. Residues 519 to 573 form a disordered region; it reads RYIGVPADKERSANPSKGSESIGVQKDVIKPCAVSAVHSSSTARPISSPSVTNKR. Low complexity predominate over residues 557–568; that stretch reads SSSTARPISSPS. Positions 577 to 581 match the EAR 1 motif; sequence LVLNL. The segment at 587–654 is disordered; it reads KSDENLQERG…KRVEDSERSV (68 aa). Polar residues predominate over residues 596-608; sequence GMQSQHGTLSNAD. A compositionally biased stretch (basic and acidic residues) spans 645-654; it reads KRVEDSERSV. Short sequence motifs (EAR) lie at residues 798–802 and 975–980; these read LDLNL and FDLNLP. The segment at 975 to 1001 is disordered; that stretch reads FDLNLPVDEDEPFDADDDSSSHENSYG. Residues 981 to 992 are compositionally biased toward acidic residues; sequence VDEDEPFDADDD.

Belongs to the ClpA/ClpB family. In terms of processing, polyubiquitinated. Strigolactone, but not karrikin, triggers rapid SCF(D3)-dependent degradation via the proteasome.

Repressor of strigolactones (SL) signaling. Subjected to a negative feedback control of SL signaling. This is Protein DWARF 53-LIKE from Oryza sativa subsp. japonica (Rice).